A 297-amino-acid chain; its full sequence is MATLLSVRRARWRDYLELTKPKVVVLMLITSLAGMFLATRAGVSWSVLLFGNLGIGLCAGGAAVVNHVVDRRIDALMARTHKRPLAQGRVEPLPALLFALALALLGMVLLLVFTNALTAWLTLASLLGYAVLYTGFLKRATPQNIVIGGLAGAAPPLLGWVAVSGHVSAEPLLLVLIIFAWTPPHFWALAIHRKEEYAKADIPMLPVTHGERYTKLHILLYTLILLAVSLLPYAIHMSGPLYLVCALALGLRFLQWAWVLYRSSRPHAAIGTFKYSIGYLFALFIALLLDHYLLLNL.

9 helical membrane passes run 23 to 43 (VVVL…RAGV), 45 to 65 (WSVL…AAVV), 93 to 113 (LPAL…LLVF), 117 to 137 (LTAW…TGFL), 145 to 165 (IVIG…AVSG), 171 to 191 (PLLL…ALAI), 216 to 236 (LHIL…YAIH), 241 to 261 (LYLV…WVLY), and 277 to 297 (IGYL…LLNL).

It belongs to the UbiA prenyltransferase family. Protoheme IX farnesyltransferase subfamily.

It is found in the cell inner membrane. The enzyme catalyses heme b + (2E,6E)-farnesyl diphosphate + H2O = Fe(II)-heme o + diphosphate. The protein operates within porphyrin-containing compound metabolism; heme O biosynthesis; heme O from protoheme: step 1/1. Its function is as follows. Converts heme B (protoheme IX) to heme O by substitution of the vinyl group on carbon 2 of heme B porphyrin ring with a hydroxyethyl farnesyl side group. The polypeptide is Protoheme IX farnesyltransferase 1 (Pseudomonas putida (strain ATCC 47054 / DSM 6125 / CFBP 8728 / NCIMB 11950 / KT2440)).